A 343-amino-acid polypeptide reads, in one-letter code: Ubiquitin thioesterase OTU1 (343 aa).

A UBX-like region spans residues 45-123 (RCKAKGGTHV…IVEEDQTRPK (79 aa)). The region spanning 144–269 (LTRTAVPADN…GIHYDPLQRN (126 aa)) is the OTU domain. Positions 149–155 (VPADNSC) are cys-loop. Asp-152 is an active-site residue. Catalysis depends on Cys-155, which acts as the Nucleophile. Residues 208–218 (IRRDDTWGGAI) form a variable-loop region. Residues 258-262 (YDGIH) are his-loop. Ile-261 serves as a coordination point for substrate. Residue His-262 is part of the active site. The S2 site stretch occupies residues 286-291 (DIVLVQ). A C2H2-type zinc finger spans residues 313–337 (LRCMLCQKGLTGQAEARDHARETGH). His-337 is a catalytic residue.

In terms of assembly, interacts with VCP; the interaction is direct. Interacts with FAF2/UBXD8. Interacts with DERL1; however interaction is dependent on the UBAX-like region, suggesting that it may be indirect. Interacts with PLAA, UBXN6 and VCP; may form a complex involved in macroautophagy.

The protein resides in the cytoplasm. The catalysed reaction is Thiol-dependent hydrolysis of ester, thioester, amide, peptide and isopeptide bonds formed by the C-terminal Gly of ubiquitin (a 76-residue protein attached to proteins as an intracellular targeting signal).. In terms of biological role, hydrolase that can remove conjugated ubiquitin from proteins and participates in endoplasmic reticulum-associated degradation (ERAD) for misfolded lumenal proteins. May act by triming the ubiquitin chain on the associated substrate to facilitate their threading through the VCP/p97 pore. Ubiquitin moieties on substrates may present a steric impediment to the threading process when the substrate is transferred to the VCP pore and threaded through VCP's axial channel. Mediates deubiquitination of 'Lys-27'-, 'Lys-29'- and 'Lys-33'-linked polyubiquitin chains. Also able to hydrolyze 'Lys-11'-linked ubiquitin chains. Cleaves both polyubiquitin and di-ubiquitin. May play a role in macroautophagy, regulating for instance the clearance of damaged lysosomes. May recruit PLAA, UBXN6 and VCP to damaged lysosome membranes decorated with K48-linked ubiquitin chains and remove these chains allowing autophagosome formation. The polypeptide is Ubiquitin thioesterase OTU1 (Yod1) (Rattus norvegicus (Rat)).